We begin with the raw amino-acid sequence, 281 residues long: 4-diphosphocytidyl-2-C-methyl-D-erythritol kinase (281 aa).

Residue Lys-15 is part of the active site. 98 to 108 (PTGAGLGGGSS) contributes to the ATP binding site. Asp-140 is a catalytic residue.

This sequence belongs to the GHMP kinase family. IspE subfamily.

It carries out the reaction 4-CDP-2-C-methyl-D-erythritol + ATP = 4-CDP-2-C-methyl-D-erythritol 2-phosphate + ADP + H(+). It participates in isoprenoid biosynthesis; isopentenyl diphosphate biosynthesis via DXP pathway; isopentenyl diphosphate from 1-deoxy-D-xylulose 5-phosphate: step 3/6. Its function is as follows. Catalyzes the phosphorylation of the position 2 hydroxy group of 4-diphosphocytidyl-2C-methyl-D-erythritol. This chain is 4-diphosphocytidyl-2-C-methyl-D-erythritol kinase, found in Neisseria meningitidis serogroup B (strain ATCC BAA-335 / MC58).